The following is a 90-amino-acid chain: Large ribosomal subunit protein bL27 (90 aa).

Residues 1 to 20 (MAHKKAGGSSRNGRDSAGKR) form a disordered region.

The protein belongs to the bacterial ribosomal protein bL27 family.

In Rhodopseudomonas palustris (strain ATCC BAA-98 / CGA009), this protein is Large ribosomal subunit protein bL27.